The chain runs to 488 residues: Germacrene A acid 8-beta-hydroxylase (488 aa).

A helical; Signal-anchor for type II membrane protein membrane pass occupies residues 2–22 (ELFTIFSIVVSSLILFTFWSL). N-linked (GlcNAc...) asparagine glycosylation occurs at N407. A heme-binding site is contributed by C429.

Belongs to the cytochrome P450 family. The cofactor is heme. Expressed in leaf primordia.

It is found in the membrane. It catalyses the reaction germacra-1(10),4,11(13)-trien-12-oate + reduced [NADPH--hemoprotein reductase] + O2 = 8beta-hydroxygermacra-1(10),4,11(13)-trien-12-oate + oxidized [NADPH--hemoprotein reductase] + H2O + H(+). The protein operates within secondary metabolite biosynthesis; terpenoid biosynthesis. Its function is as follows. Involved in the biosynthesis of germacrene-derived sesquiterpene lactones. Hydroxylates germacrene A acid to 8-beta-hydroxy-germacrene A acid. Unlike 6-alpha-hydroxy-germacrene A acid, this compound cannot undergo spontaneous lactonization. The sequence is that of Germacrene A acid 8-beta-hydroxylase from Helianthus annuus (Common sunflower).